The primary structure comprises 127 residues: Small ribosomal subunit protein uS11 (127 aa).

This sequence belongs to the universal ribosomal protein uS11 family. Part of the 30S ribosomal subunit. Interacts with proteins S7 and S18. Binds to IF-3.

Located on the platform of the 30S subunit, it bridges several disparate RNA helices of the 16S rRNA. Forms part of the Shine-Dalgarno cleft in the 70S ribosome. The polypeptide is Small ribosomal subunit protein uS11 (Rickettsia canadensis (strain McKiel)).